A 147-amino-acid polypeptide reads, in one-letter code: Large ribosomal subunit protein uL16 (147 aa).

A compositionally biased stretch (basic residues) spans 1 to 16 (MLMPKRVKRRRVHRGR). Positions 1 to 20 (MLMPKRVKRRRVHRGRMTGQ) are disordered.

This sequence belongs to the universal ribosomal protein uL16 family. As to quaternary structure, part of the 50S ribosomal subunit.

Binds 23S rRNA and is also seen to make contacts with the A and possibly P site tRNAs. This is Large ribosomal subunit protein uL16 from Alkaliphilus metalliredigens (strain QYMF).